The sequence spans 325 residues: Protein FAM50B (325 aa).

Residue Ala-2 is modified to N-acetylalanine. 2 disordered regions span residues 92–111 (QHLEEQRLQQERQREQEQRR) and 137–160 (RRAGNLGKNPDVDTSFLPDRDREE).

It belongs to the FAM50 family. In terms of tissue distribution, widely expressed. Mostly abundant in testis and adult and fetal brain.

The chain is Protein FAM50B (FAM50B) from Homo sapiens (Human).